The following is a 1174-amino-acid chain: Carboxylic acid reductase (1174 aa).

AMP-binding positions include His297, Ser392, 413–414, Thr418, Asp491, 503–506, Lys512, and Lys612; these read EG and YLDR. The Carrier domain maps to 651 to 726; that stretch reads APVLVTVCRA…ALADYVEAAR (76 aa). Position 685 is an O-(pantetheine 4'-phosphoryl)serine (Ser685). Residues 787–791, Arg814, Arg824, 854–855, 880–882, 919–920, Tyr956, and Lys960 each bind NADP(+); these read TGFLG, DK, PAA, and TS.

The protein belongs to the ATP-dependent AMP-binding enzyme family. Carboxylic acid reductase subfamily. It depends on pantetheine 4'-phosphate as a cofactor.

The catalysed reaction is a carboxylate + ATP + NADPH + H(+) = an aldehyde + AMP + diphosphate + NADP(+). Functionally, catalyzes the ATP- and NADPH-dependent reduction of carboxylic acids to the corresponding aldehydes. Catalyzes the reduction of a wide range of aliphatic fatty acids (C6-C18) into their corresponding aldehydes. Can also reduce benzoate to benzaldehyde. Has a preference for NADPH over NADH as the electron donor. This is Carboxylic acid reductase from Mycobacterium marinum (strain ATCC BAA-535 / M).